Consider the following 309-residue polypeptide: ADP-L-glycero-D-manno-heptose-6-epimerase (309 aa).

Residues 10–11 (FI), 31–32 (DN), Lys-38, Lys-53, 75–79 (LGACS), and Asn-92 contribute to the NADP(+) site. The active-site Proton acceptor is Tyr-140. Lys-144 is a binding site for NADP(+). Asn-169 provides a ligand contact to substrate. NADP(+)-binding residues include Val-170 and Lys-178. Residue Lys-178 is the Proton acceptor of the active site. Substrate is bound by residues Ser-180, His-187, 201-204 (FLGS), Arg-209, and Tyr-272.

Belongs to the NAD(P)-dependent epimerase/dehydratase family. HldD subfamily. As to quaternary structure, homopentamer. NADP(+) serves as cofactor.

It carries out the reaction ADP-D-glycero-beta-D-manno-heptose = ADP-L-glycero-beta-D-manno-heptose. Its pathway is nucleotide-sugar biosynthesis; ADP-L-glycero-beta-D-manno-heptose biosynthesis; ADP-L-glycero-beta-D-manno-heptose from D-glycero-beta-D-manno-heptose 7-phosphate: step 4/4. Functionally, catalyzes the interconversion between ADP-D-glycero-beta-D-manno-heptose and ADP-L-glycero-beta-D-manno-heptose via an epimerization at carbon 6 of the heptose. The chain is ADP-L-glycero-D-manno-heptose-6-epimerase from Hamiltonella defensa subsp. Acyrthosiphon pisum (strain 5AT).